Here is a 757-residue protein sequence, read N- to C-terminus: 5-methyltetrahydropteroyltriglutamate--homocysteine methyltransferase (757 aa).

5-methyltetrahydropteroyltri-L-glutamate contacts are provided by residues 15-18 (RELK) and Lys-114. L-homocysteine-binding positions include 428 to 430 (IGS) and Glu-481. L-methionine-binding positions include 428–430 (IGS) and Glu-481. 5-methyltetrahydropteroyltri-L-glutamate is bound by residues 512 to 513 (RC) and Trp-558. Asp-596 contributes to the L-homocysteine binding site. Asp-596 serves as a coordination point for L-methionine. Glu-602 lines the 5-methyltetrahydropteroyltri-L-glutamate pocket. 3 residues coordinate Zn(2+): His-639, Cys-641, and Glu-663. His-692 acts as the Proton donor in catalysis. Cys-724 contributes to the Zn(2+) binding site.

Belongs to the vitamin-B12 independent methionine synthase family. Requires Zn(2+) as cofactor.

The catalysed reaction is 5-methyltetrahydropteroyltri-L-glutamate + L-homocysteine = tetrahydropteroyltri-L-glutamate + L-methionine. It participates in amino-acid biosynthesis; L-methionine biosynthesis via de novo pathway; L-methionine from L-homocysteine (MetE route): step 1/1. In terms of biological role, catalyzes the transfer of a methyl group from 5-methyltetrahydrofolate to homocysteine resulting in methionine formation. The polypeptide is 5-methyltetrahydropteroyltriglutamate--homocysteine methyltransferase (Lactococcus lactis subsp. cremoris (strain MG1363)).